The primary structure comprises 328 residues: ATP synthase mitochondrial F1 complex assembly factor 1 (328 aa).

A mitochondrion-targeting transit peptide spans 1–57 (MAAVVVAAAGGAGPAVLQVAGLYRGLCAVRSRALGLGLVSPAQLRVFPVRPGSGRPE).

Belongs to the ATP11 family. Interacts with ATP5F1B; involved in the assembly of the F1 component of the mitochondrial ATP synthase (ATPase). In terms of tissue distribution, weakly expressed in muscle.

It is found in the mitochondrion inner membrane. Has a complex stabilizing activity in the assembly of the mitochondrial F1-F0 complex. This is ATP synthase mitochondrial F1 complex assembly factor 1 from Homo sapiens (Human).